The sequence spans 219 residues: Leukocyte surface antigen CD53 (219 aa).

The Cytoplasmic segment spans residues 2–11 (GMSSLKLLKY). The chain crosses the membrane as a helical span at residues 12-32 (VLFFFNFLFWVCGCCILGFGI). Residues 33–54 (HLLVQNTYGILFRNLPFLTLGN) are Extracellular-facing. The helical transmembrane segment at 55–69 (VLVIVGSIIMVVAFL) threads the bilayer. The Cytoplasmic portion of the chain corresponds to 70-80 (GCMGSIKENKC). A helical transmembrane segment spans residues 81-106 (LLMSFFVLLLLILLAEVTLAILLFVY). Residues 107 to 181 (EKKINTLVAE…KKGQAWFHSN (75 aa)) are Extracellular-facing. Asparagine 119, asparagine 129, and asparagine 148 each carry an N-linked (GlcNAc...) asparagine glycan. Residues 182 to 206 (FLYIGIVTICVCVIQVLGMSFALTL) traverse the membrane as a helical segment. Over 207–219 (NCQIDKTSQALGL) the chain is Cytoplasmic.

This sequence belongs to the tetraspanin (TM4SF) family. As to quaternary structure, interacts with SCIMP. Interacts with CD45/PTPRC. Interacts with IL7R. Interacts with RBL2 and PPP2CA. Spleen and thymus, B-cells, monocytes, macrophages, neutrophils, single (CD4 or CD8) positive thymocytes, peripheral T-cells.

It is found in the cell membrane. The protein localises to the cell junction. Its subcellular location is the membrane. In terms of biological role, required for efficient formation of myofibers in regenerating muscle at the level of cell fusion. May be involved in growth regulation in hematopoietic cells. The chain is Leukocyte surface antigen CD53 (Cd53) from Rattus norvegicus (Rat).